The following is a 1637-amino-acid chain: Glutamate rich 3 (1637 aa).

Disordered regions lie at residues 145-192 (PLTL…GSLL), 408-453 (PSST…KESC), 478-814 (EWKG…QDAG), 1111-1194 (VGTS…SPRE), 1238-1445 (IEKV…SGER), and 1457-1637 (KAEN…RETA). Residues 169–185 (LLSSRQTRNGSKITSGS) are compositionally biased toward polar residues. Basic and acidic residues-rich tracts occupy residues 416–426 (EKITEKKEEPP), 443–452 (KRNEMERKES), and 478–487 (EWKGKSGRDV). Residues 500–523 (YEEDFEVDDEKQDEKVDEDEDQAD) are compositionally biased toward acidic residues. Residues 534-557 (TESEKDNRNPEKKIETSSEKAHDS) show a composition bias toward basic and acidic residues. Positions 558–572 (ENEDTGCSDSEEDDR) are enriched in acidic residues. 2 stretches are compositionally biased toward low complexity: residues 579–590 (SSISSRSHPYSS) and 608–617 (EEGSSRSSSS). Composition is skewed to basic and acidic residues over residues 619-638 (DLRE…KYLE), 677-693 (ESEH…EVRA), 769-802 (QEMH…ESGM), 1115-1130 (EVKE…KTDG), 1264-1307 (LKTE…KDVE), 1319-1329 (KLLEDPPKERA), 1342-1357 (SPKE…KGGE), and 1402-1412 (RCEEWAAKELD). The span at 1476 to 1487 (VTGSLTGQNWNM) shows a compositional bias: polar residues. Composition is skewed to basic and acidic residues over residues 1550 to 1568 (AEER…KVAV), 1589 to 1599 (AQDREGGETKA), and 1614 to 1637 (GKDE…RETA).

The protein resides in the cell projection. The protein localises to the cilium. Its subcellular location is the cytoplasm. Functionally, component of the primary cilium that controls cilium formation and length. May function within retrograde intraflagellar transport (IFT)-associated pathways to remove signaling proteins from primary cilia. Also involved in neuronal vesicle biogenesis and neurotransmitter vesicular function. In Mus musculus (Mouse), this protein is Glutamate rich 3.